The following is a 157-amino-acid chain: Small ribosomal subunit protein uS7 (157 aa).

Belongs to the universal ribosomal protein uS7 family. In terms of assembly, part of the 30S ribosomal subunit. Contacts proteins S9 and S11.

Its function is as follows. One of the primary rRNA binding proteins, it binds directly to 16S rRNA where it nucleates assembly of the head domain of the 30S subunit. Is located at the subunit interface close to the decoding center, probably blocks exit of the E-site tRNA. In Protochlamydia amoebophila (strain UWE25), this protein is Small ribosomal subunit protein uS7.